Here is a 103-residue protein sequence, read N- to C-terminus: Floral defensin-like protein 1 (103 aa).

The N-terminal stretch at 1-25 is a signal peptide; it reads MARSICFFAVAILALMLFAAYDAEA. Intrachain disulfides connect Cys28-Cys72, Cys32-Cys48, Cys39-Cys59, Cys45-Cys66, and Cys49-Cys68. Positions 73–103 are cleaved as a propeptide — removed in mature form; sequence VFEKTEATQTETFTKDVNTLAEALLEADMMV.

The protein belongs to the DEFL family. In terms of processing, when compared to other plant defensins, the petunia defensins have an additional fifth disulfide bond. Petals.

Its subcellular location is the secreted. The protein resides in the vacuole. Functionally, plant defense peptide with antifungal activity against F.oxysporum and B.cinerea. The polypeptide is Floral defensin-like protein 1 (D1) (Petunia hybrida (Petunia)).